A 261-amino-acid chain; its full sequence is DNA repair protein RecO (261 aa).

This sequence belongs to the RecO family.

In terms of biological role, involved in DNA repair and RecF pathway recombination. The sequence is that of DNA repair protein RecO from Chlorobium phaeobacteroides (strain DSM 266 / SMG 266 / 2430).